We begin with the raw amino-acid sequence, 773 residues long: Carnitine O-palmitoyltransferase 1, liver isoform (773 aa).

Ala-2 carries the N-acetylalanine modification. Residues 2 to 47 (AEAHQAVAFQFTVTPDGIDLRLSHEALRQIYLSGLHSWKKKFIRFK) lie on the Cytoplasmic side of the membrane. Residues 48 to 73 (NGIITGVYPASPSSWLIVVVGVMTTM) form a helical membrane-spanning segment. At 74 to 102 (YAKIDPSLGIIAKINRTLETANCMSSQTK) the chain is on the mitochondrial intermembrane side. Residues 103-122 (NVVSGVLFGTGLWVALIVTM) traverse the membrane as a helical segment. Residues 123-773 (RYSLKVLLSY…LFGLSSNSKK (651 aa)) lie on the Cytoplasmic side of the membrane. Tyr-282 is subject to 3'-nitrotyrosine. The active-site Proton acceptor is the His-473. Residue 555–567 (GKGIIKKCRTSPD) participates in CoA binding. The residue at position 588 (Thr-588) is a Phosphothreonine. Tyr-589 carries the 3'-nitrotyrosine modification. Tyr-589 and Thr-602 together coordinate (R)-carnitine. Thr-604 is modified (phosphothreonine). A phosphoserine mark is found at Ser-741 and Ser-747.

It belongs to the carnitine/choline acetyltransferase family. As to quaternary structure, homohexamer and homotrimer. Identified in a complex that contains at least CPT1A, ACSL1 and VDAC1. Also identified in complexes with ACSL1 and VDAC2 and VDAC3. Interacts with ZDHHC4. As to expression, strong expression in kidney and heart, and lower in liver and skeletal muscle.

It is found in the mitochondrion outer membrane. It catalyses the reaction (R)-carnitine + hexadecanoyl-CoA = O-hexadecanoyl-(R)-carnitine + CoA. The enzyme catalyses succinyl-CoA + L-lysyl-[protein] = N(6)-succinyl-L-lysyl-[protein] + CoA + H(+). The protein operates within lipid metabolism; fatty acid beta-oxidation. With respect to regulation, inhibited by malonyl-CoA. Its function is as follows. Catalyzes the transfer of the acyl group of long-chain fatty acid-CoA conjugates onto carnitine, an essential step for the mitochondrial uptake of long-chain fatty acids and their subsequent beta-oxidation in the mitochondrion. Also possesses a lysine succinyltransferase activity that can regulate enzymatic activity of substrate proteins such as ENO1 and metabolism independent of its classical carnitine O-palmitoyltransferase activity. Plays an important role in hepatic triglyceride metabolism. Also plays a role in inducible regulatory T-cell (iTreg) differentiation once activated by butyryl-CoA that antagonizes malonyl-CoA-mediated CPT1A repression. Sustains the IFN-I response by recruiting ZDHCC4 to palmitoylate MAVS at the mitochondria leading to MAVS stabilization and activation. Promotes ROS-induced oxidative stress in liver injury via modulation of NFE2L2 and NLRP3-mediated signaling pathways. In Homo sapiens (Human), this protein is Carnitine O-palmitoyltransferase 1, liver isoform.